We begin with the raw amino-acid sequence, 2867 residues long: Reticulocyte-binding protein 2 (2867 aa).

The signal sequence occupies residues 1–21 (MEKNVLWVIFYNFLVILLASC). The Extracellular segment spans residues 22-2805 (NDSNRSKSNS…TAKEAIGKTR (2784 aa)). Disordered stretches follow at residues 52-73 (KYNN…NNHN), 2650-2682 (ETKT…ASVP), and 2712-2799 (DNTH…TAKE). Residues 61-73 (NIGNQINNDNNHN) show a composition bias toward low complexity. Basic and acidic residues predominate over residues 2659–2674 (KAKEEKVPPKETENRA). The segment covering 2725–2736 (DSISAPQEQVEY) has biased composition (polar residues). Acidic residues predominate over residues 2743-2754 (ENDETTEEESEH). A compositionally biased stretch (basic and acidic residues) spans 2755-2799 (DDAHDDTHDDTHDDTHDDTHDDTHDDTHDDTHDESQTGRDSTAKE). 7 tandem repeats follow at residues 2758–2761 (HDDT), 2762–2765 (HDDT), 2766–2769 (HDDT), 2770–2773 (HDDT), 2774–2777 (HDDT), 2778–2781 (HDDT), and 2782–2785 (HDDT). A 7 X 4 AA tandem repeats of H-D-D-T region spans residues 2758-2785 (HDDTHDDTHDDTHDDTHDDTHDDTHDDT). The helical transmembrane segment at 2806 to 2826 (LAGAVIIAMSVLSGFIIIVFK) threads the bilayer. The Cytoplasmic portion of the chain corresponds to 2827–2867 (DKDEEEKDHNEHGYNEAFGEHDEYNMHDKEEVIEVCFNEED).

It localises to the cell membrane. In terms of biological role, involved in reticulocyte adhesion. Specifically binds to human reticulocyte cells. This chain is Reticulocyte-binding protein 2 (RBP-2), found in Plasmodium vivax (strain Belem).